Here is a 461-residue protein sequence, read N- to C-terminus: Photosystem II CP43 reaction center protein (461 aa).

A propeptide spanning residues 1–2 (ME) is cleaved from the precursor. At Thr-3 the chain carries N-acetylthreonine. Residue Thr-3 is modified to Phosphothreonine. A run of 5 helical transmembrane segments spans residues 57–81 (LFEV…PHLA), 122–143 (LLGP…KDRN), 166–188 (KALY…RKIT), 243–263 (KPFA…LSYS), and 279–300 (WFNN…ASQA). Position 355 (Glu-355) interacts with [CaMn4O5] cluster. The helical transmembrane segment at 435–459 (RARAAAAGFEKGIDRDLEPVLSMTP) threads the bilayer.

This sequence belongs to the PsbB/PsbC family. PsbC subfamily. In terms of assembly, PSII is composed of 1 copy each of membrane proteins PsbA, PsbB, PsbC, PsbD, PsbE, PsbF, PsbH, PsbI, PsbJ, PsbK, PsbL, PsbM, PsbT, PsbX, PsbY, PsbZ, Psb30/Ycf12, at least 3 peripheral proteins of the oxygen-evolving complex and a large number of cofactors. It forms dimeric complexes. It depends on Binds multiple chlorophylls and provides some of the ligands for the Ca-4Mn-5O cluster of the oxygen-evolving complex. It may also provide a ligand for a Cl- that is required for oxygen evolution. PSII binds additional chlorophylls, carotenoids and specific lipids. as a cofactor.

It localises to the plastid. Its subcellular location is the chloroplast thylakoid membrane. In terms of biological role, one of the components of the core complex of photosystem II (PSII). It binds chlorophyll and helps catalyze the primary light-induced photochemical processes of PSII. PSII is a light-driven water:plastoquinone oxidoreductase, using light energy to abstract electrons from H(2)O, generating O(2) and a proton gradient subsequently used for ATP formation. This chain is Photosystem II CP43 reaction center protein, found in Ceratophyllum demersum (Rigid hornwort).